The following is a 184-amino-acid chain: ATP synthase subunit b, chloroplastic (184 aa).

The chain crosses the membrane as a helical span at residues Leu-27 to Leu-49.

This sequence belongs to the ATPase B chain family. In terms of assembly, F-type ATPases have 2 components, F(1) - the catalytic core - and F(0) - the membrane proton channel. F(1) has five subunits: alpha(3), beta(3), gamma(1), delta(1), epsilon(1). F(0) has four main subunits: a(1), b(1), b'(1) and c(10-14). The alpha and beta chains form an alternating ring which encloses part of the gamma chain. F(1) is attached to F(0) by a central stalk formed by the gamma and epsilon chains, while a peripheral stalk is formed by the delta, b and b' chains.

Its subcellular location is the plastid. It localises to the chloroplast thylakoid membrane. Its function is as follows. F(1)F(0) ATP synthase produces ATP from ADP in the presence of a proton or sodium gradient. F-type ATPases consist of two structural domains, F(1) containing the extramembraneous catalytic core and F(0) containing the membrane proton channel, linked together by a central stalk and a peripheral stalk. During catalysis, ATP synthesis in the catalytic domain of F(1) is coupled via a rotary mechanism of the central stalk subunits to proton translocation. In terms of biological role, component of the F(0) channel, it forms part of the peripheral stalk, linking F(1) to F(0). The sequence is that of ATP synthase subunit b, chloroplastic from Manihot esculenta (Cassava).